Reading from the N-terminus, the 103-residue chain is Large ribosomal subunit protein bL21 (103 aa).

This sequence belongs to the bacterial ribosomal protein bL21 family. In terms of assembly, part of the 50S ribosomal subunit. Contacts protein L20.

Functionally, this protein binds to 23S rRNA in the presence of protein L20. The sequence is that of Large ribosomal subunit protein bL21 from Cupriavidus necator (strain ATCC 17699 / DSM 428 / KCTC 22496 / NCIMB 10442 / H16 / Stanier 337) (Ralstonia eutropha).